A 428-amino-acid polypeptide reads, in one-letter code: Gamma-glutamyl phosphate reductase (428 aa).

The protein belongs to the gamma-glutamyl phosphate reductase family.

Its subcellular location is the cytoplasm. It catalyses the reaction L-glutamate 5-semialdehyde + phosphate + NADP(+) = L-glutamyl 5-phosphate + NADPH + H(+). The protein operates within amino-acid biosynthesis; L-proline biosynthesis; L-glutamate 5-semialdehyde from L-glutamate: step 2/2. Functionally, catalyzes the NADPH-dependent reduction of L-glutamate 5-phosphate into L-glutamate 5-semialdehyde and phosphate. The product spontaneously undergoes cyclization to form 1-pyrroline-5-carboxylate. The protein is Gamma-glutamyl phosphate reductase of Chromohalobacter salexigens (strain ATCC BAA-138 / DSM 3043 / CIP 106854 / NCIMB 13768 / 1H11).